Here is a 1615-residue protein sequence, read N- to C-terminus: Low-density lipoprotein receptor-related protein 5 (1615 aa).

The N-terminal stretch at 1 to 31 (MEAAPPGPPWPLLLLLLLLLALCGCPAPAAA) is a signal peptide. Residues 32–288 (SPLLLFANRR…YSPMDIQVLS (257 aa)) form a beta-propeller 1 region. At 32–1384 (SPLLLFANRR…PPSDDSPAHS (1353 aa)) the chain is on the extracellular side. LDL-receptor class B repeat units follow at residues 75 to 119 (GAVY…DWVG), 120 to 162 (KKLY…DPAH), 163 to 206 (GYMY…DLEE), 207 to 247 (QKLY…TLSG), and 248 to 290 (DTLY…LSQE). A YWTD 1 repeat occupies 78 to 81 (YWTD). N-linked (GlcNAc...) asparagine glycosylation occurs at asparagine 93. One copy of the YWTD 2 repeat lies at 123–126 (YWTD). A glycan (N-linked (GlcNAc...) asparagine) is linked at asparagine 138. Residues 166–169 (YWTD) form a YWTD 3 repeat. The stretch at 251–254 (YWTD) is one YWTD 4 repeat. An EGF-like 1 domain is found at 295–337 (FHTRCEEDNGGCSHLCLLSPSEPFYTCACPTGVQLQDNGRTCK). 3 disulfide bridges follow: cysteine 299–cysteine 310, cysteine 306–cysteine 321, and cysteine 323–cysteine 336. Residues 341–602 (EEVLLLARRT…AVNVAKVVGT (262 aa)) form a beta-propeller 2 region. LDL-receptor class B repeat units follow at residues 385–427 (GYVY…DWVA), 428–470 (RNLY…HPVM), 471–514 (GLMY…DLQE), 515–557 (GKLY…LGDF), and 558–600 (IYWT…AKVV). YWTD repeat units lie at residues 388–391 (YWTD) and 431–434 (YWTD). Asparagine 446 carries N-linked (GlcNAc...) asparagine glycosylation. The stretch at 474–477 (YWTD) is one YWTD 7 repeat. Residue asparagine 499 is glycosylated (N-linked (GlcNAc...) asparagine). A YWTD 8 repeat occupies 559-562 (YWTD). The EGF-like 2 domain maps to 601 to 641 (GTNPCADRNGGCSHLCFFTPHATRCGCPIGLELLSDMKTCI). 3 disulfide bridges follow: cysteine 605–cysteine 616, cysteine 612–cysteine 625, and cysteine 627–cysteine 640. The beta-propeller 3 stretch occupies residues 644 to 903 (EAFLVFTSRA…VFHSSRQDGL (260 aa)). 5 LDL-receptor class B repeats span residues 687–729 (NHIY…DWMG), 730–772 (KNLY…DPTK), 773–815 (GYIY…DYAD), 816–855 (QRLY…TQYS), and 856–898 (DYIY…FHSS). A YWTD 9 repeat occupies 690–693 (YWTD). The N-linked (GlcNAc...) asparagine glycan is linked to asparagine 705. YWTD repeat units lie at residues 819–822 (YWTD) and 859–862 (YWTD). The N-linked (GlcNAc...) asparagine glycan is linked to asparagine 878. The region spanning 902–942 (GLNDCMHNNGQCGQLCLAIPGGHRCGCASHYTLDPSSRNCS) is the EGF-like 3 domain. Disulfide bonds link cysteine 906-cysteine 917, cysteine 913-cysteine 926, and cysteine 928-cysteine 941. The tract at residues 945–1212 (TTFLLFSQKS…AVEEVSLEEF (268 aa)) is beta-propeller 4. LDL-receptor class B repeat units follow at residues 989–1035 (KFIY…DIYS), 1036–1078 (RTLF…NAER), 1079–1123 (GYLY…DNTL), 1124–1164 (GKLF…TILG), and 1165–1207 (KHLY…VEEV). The region spanning 1213–1254 (SAHPCARDNGGCSHICIAKGDGTPRCSCPVHLVLLQNLLTCG) is the EGF-like 4 domain. 12 disulfides stabilise this stretch: cysteine 1217/cysteine 1228, cysteine 1224/cysteine 1238, cysteine 1240/cysteine 1253, cysteine 1259/cysteine 1273, cysteine 1266/cysteine 1286, cysteine 1280/cysteine 1295, cysteine 1298/cysteine 1310, cysteine 1305/cysteine 1323, cysteine 1317/cysteine 1332, cysteine 1336/cysteine 1348, cysteine 1343/cysteine 1361, and cysteine 1355/cysteine 1370. LDL-receptor class A domains follow at residues 1258-1296 (TCSP…EGCP), 1297-1333 (VCSA…ADCD), and 1335-1371 (ICLP…LMCE). The helical transmembrane segment at 1385–1407 (SAIGPVIGIILSLFVMGGVYFVC) threads the bilayer. The Cytoplasmic portion of the chain corresponds to 1408–1615 (QRVVCQRYAG…PPPSPCTDSS (208 aa)). The interval 1475 to 1501 (RNHVTGASSSSSSSTKATLYPPILNPP) is disordered. Positions 1500–1506 (PPPSPAT) match the PPPSP motif A motif. Residues 1538–1545 (PPTTPCST) carry the PPPSP motif B motif. Residues 1568 to 1615 (SDSDPYPPPPTPHSQYLSAEDSCPPSPATERSYFHLFPPPPSPCTDSS) form a disordered region. The PPPSP motif C signature appears at 1574–1581 (PPPPTPHS). Residues 1591-1596 (PPSPAT) carry the PPPSP motif D motif. The segment covering 1604–1615 (FPPPPSPCTDSS) has biased composition (pro residues). The PPPSP motif E signature appears at 1605-1612 (PPPPSPCT).

The protein belongs to the LDLR family. In terms of assembly, homodimer; disulfide-linked. Forms phosphorylated oligomer aggregates on Wnt-signaling. Component of a Wnt-signaling complex that contains a WNT protein, a FZD protein and LRP5 or LRP6. Interacts with FZD8; the interaction is formed on WNT-binding and signaling. Interacts (via the phosphorylated PPPSP motif domains) with AXIN1; the interaction prevents inhibition of beta-catenin phosphorylation and signaling and is enhanced in the presence of GSK3B and WNT1 or WNT3A. Interacts (via beta-propeller regions 3 and 4) with DKK1; the interaction, enhanced by MESD and/or KREMEN, inhibits beta-catenin signaling by preventing GSK3-mediated phosphorylation of the PPPSP motifs and subsequent, AXIN1 binding. Interacts with MESD; the interaction prevents the formation of LRP5 aggregates, targets LRP5 to the plasma membrane and, when complexed with KREMEN2, increases DKK1 binding. Interacts with CSNK1E. Interacts with SOST; the interaction antagonizes canonical Wnt signaling. Interacts with APCDD1. Interacts with CAPRIN2. In terms of processing, phosphorylation of cytoplasmic PPPSP motifs regulates the signal transduction of the Wnt signaling pathway through acting as a docking site for AXIN1. In terms of tissue distribution, widely expressed, with the highest level of expression in the liver and in aorta.

Its subcellular location is the membrane. It localises to the endoplasmic reticulum. Its function is as follows. Acts as a coreceptor with members of the frizzled family of seven-transmembrane spanning receptors to transduce signal by Wnt proteins. Activates the canonical Wnt signaling pathway that controls cell fate determination and self-renewal during embryonic development and adult tissue regeneration. In particular, may play an important role in the development of the posterior patterning of the epiblast during gastrulation. During bone development, regulates osteoblast proliferation and differentiation thus determining bone mass. Mechanistically, the formation of the signaling complex between Wnt ligand, frizzled receptor and LRP5 coreceptor promotes the recruitment of AXIN1 to LRP5, stabilizing beta-catenin/CTNNB1 and activating TCF/LEF-mediated transcriptional programs. Acts as a coreceptor for non-Wnt proteins, such as norrin/NDP. Binding of norrin/NDP to frizzled 4/FZD4-LRP5 receptor complex triggers beta-catenin/CTNNB1-dependent signaling known to be required for retinal vascular development. Plays a role in controlling postnatal vascular regression in retina via macrophage-induced endothelial cell apoptosis. The polypeptide is Low-density lipoprotein receptor-related protein 5 (Homo sapiens (Human)).